The sequence spans 236 residues: Probable glutathione S-transferase GSTU6 (236 aa).

Positions 5–84 (GELKLLGVWS…YIDEVWPGGA (80 aa)) constitute a GST N-terminal domain. Glutathione contacts are provided by residues Ser15, Lys42, Val56, and 68 to 69 (ES). In terms of domain architecture, GST C-terminal spans 94-228 (DPYERAVARF…KLLEFRQTLL (135 aa)).

It belongs to the GST superfamily. Tau family. In terms of tissue distribution, expressed in seedling shoots and roots.

It carries out the reaction RX + glutathione = an S-substituted glutathione + a halide anion + H(+). In terms of biological role, conjugation of reduced glutathione to a wide number of exogenous and endogenous hydrophobic electrophiles. In Oryza sativa subsp. japonica (Rice), this protein is Probable glutathione S-transferase GSTU6 (GSTU6).